A 474-amino-acid chain; its full sequence is ATP synthase subunit beta 2 (474 aa).

156–163 serves as a coordination point for ATP; sequence GGAGVGKT.

Belongs to the ATPase alpha/beta chains family. F-type ATPases have 2 components, CF(1) - the catalytic core - and CF(0) - the membrane proton channel. CF(1) has five subunits: alpha(3), beta(3), gamma(1), delta(1), epsilon(1). CF(0) has three main subunits: a(1), b(2) and c(9-12). The alpha and beta chains form an alternating ring which encloses part of the gamma chain. CF(1) is attached to CF(0) by a central stalk formed by the gamma and epsilon chains, while a peripheral stalk is formed by the delta and b chains.

The protein resides in the cell inner membrane. It catalyses the reaction ATP + H2O + 4 H(+)(in) = ADP + phosphate + 5 H(+)(out). Its function is as follows. Produces ATP from ADP in the presence of a proton gradient across the membrane. The catalytic sites are hosted primarily by the beta subunits. In Shewanella frigidimarina (strain NCIMB 400), this protein is ATP synthase subunit beta 2.